A 517-amino-acid polypeptide reads, in one-letter code: Zinc finger protein 215 (517 aa).

The SCAN box domain occupies 48–126 (RQKFRHFQYL…KDMVTLIEDV (79 aa)). A KRAB domain is found at 164 to 237 (VTFKDVVVEF…EKEIPRKTIF (74 aa)). C2H2-type zinc fingers lie at residues 379 to 401 (YECY…QIIH), 407 to 429 (YKCS…QKLH), 462 to 484 (YQCV…QMIH), and 490 to 512 (FKCK…QKLH).

This sequence belongs to the krueppel C2H2-type zinc-finger protein family.

The protein localises to the nucleus. Its function is as follows. May be involved in transcriptional regulation. The sequence is that of Zinc finger protein 215 (ZNF215) from Homo sapiens (Human).